Here is a 216-residue protein sequence, read N- to C-terminus: 3-keto-L-gulonate-6-phosphate decarboxylase UlaD (216 aa).

Residue Asp-11 coordinates substrate. 2 residues coordinate Mg(2+): Glu-33 and Asp-62. Arg-192 provides a ligand contact to substrate.

The protein belongs to the HPS/KGPDC family. KGPDC subfamily. As to quaternary structure, homodimer. Mg(2+) serves as cofactor.

The enzyme catalyses 3-dehydro-L-gulonate 6-phosphate + H(+) = L-xylulose 5-phosphate + CO2. It functions in the pathway cofactor degradation; L-ascorbate degradation; D-xylulose 5-phosphate from L-ascorbate: step 2/4. Functionally, catalyzes the decarboxylation of 3-keto-L-gulonate-6-P into L-xylulose-5-P. Is involved in the anaerobic L-ascorbate utilization. This is 3-keto-L-gulonate-6-phosphate decarboxylase UlaD from Escherichia coli O127:H6 (strain E2348/69 / EPEC).